A 518-amino-acid polypeptide reads, in one-letter code: Gypsy retrotransposon integrase-like protein 1 (518 aa).

The Integrase catalytic domain occupies 135–293 (VVGNPWSVVT…PYFQMFNRNP (159 aa)). A disordered region spans residues 326 to 348 (NQTPAAGQMESSTSEELSKSKVA). Ser498 carries the phosphoserine modification.

In Rattus norvegicus (Rat), this protein is Gypsy retrotransposon integrase-like protein 1 (GIN1).